The chain runs to 120 residues: Large ribosomal subunit protein uL18 (120 aa).

This sequence belongs to the universal ribosomal protein uL18 family. In terms of assembly, part of the 50S ribosomal subunit; part of the 5S rRNA/L5/L18/L25 subcomplex. Contacts the 5S and 23S rRNAs.

Functionally, this is one of the proteins that bind and probably mediate the attachment of the 5S RNA into the large ribosomal subunit, where it forms part of the central protuberance. This chain is Large ribosomal subunit protein uL18, found in Hyphomonas neptunium (strain ATCC 15444).